A 312-amino-acid chain; its full sequence is Cytochrome f (312 aa).

The signal sequence occupies residues 1–30 (MYLSKNFFLNLKTFIFSFFVLCFFSQSAQA). Tyr31, Cys51, Cys54, and His55 together coordinate heme. The chain crosses the membrane as a helical span at residues 278–298 (VQGLLLFSLFILLAQIFLVLK).

Belongs to the cytochrome f family. In terms of assembly, the 4 large subunits of the cytochrome b6-f complex are cytochrome b6, subunit IV (17 kDa polypeptide, petD), cytochrome f and the Rieske protein, while the 4 small subunits are PetG, PetL, PetM and PetN. The complex functions as a dimer. The cofactor is heme.

The protein resides in the plastid. It is found in the chloroplast thylakoid membrane. Functionally, component of the cytochrome b6-f complex, which mediates electron transfer between photosystem II (PSII) and photosystem I (PSI), cyclic electron flow around PSI, and state transitions. This chain is Cytochrome f (petA), found in Bigelowiella natans (Pedinomonas minutissima).